The chain runs to 957 residues: MTQTLSQLENRGAFIERHIGPDAAQQQEMLNAVGAESLNALTGQIVPKDIQLATPPQVGEAATEYAALAELKAIAGRNKRFTSYIGMGYTAVQLPPVILRNMLENPGWYTAYTPYQPEVSQGRLEALLNFQQVTLDLTGLDMASASLLDEATAAAEAMAMAKRVSKLKNANRFFVASDVHPQTLDVVRTRAETFGFDVIVDDAAKALDHQDVFGVLLQQVGSTGEIHDYSALISELKARKVIVSVAADFMALVLLTAPGKQGADIVFGSAQRFGVPMGYGGPHAAFFAAKDEFKRSMPGRIIGVSKDAAGNTALRMAMQTREQHIRREKANSNICTSQVLLANIASLYAVYHGPVGLKRIANRIHRLTDILAAGLQQKGLKLRHAHYFDTLCVEVADKAAVLARAEAAEINLRSDIHNAVGITLDETTTRENVAQLFNVLLGDSHGLNIETLDKDVALDSRSIQQSMLRDDAILTHPVFNRYHSETEMMRYMHSLERKDLALNQAMIPLGSCTMKLNAAAEMIPITWPEFAELHPFCPPEQAEGYHQMISQLSDWLVKLTGYDAVCMQPNSGAQGEYAGLLAIRHYHESRNEGHRDICLIPASAHGTNPASAHMAGMQVVVVACDKNGNIDLDDLRAKAEQHAANLSCIMVTYPSTHGVYEETIREVCEVVHQFGGQVYLDGANMNAQVGITSPGFIGADVSHLNLHKTFCIPHGGGGPGMGPIGVKAHLAPFVPGHSVVQIEGMLTRQGAVSAAPFGSASILPISWMYIRMMGAEGMKQASQVAILNANYIASRLKDAYPVLYTGRDGRVAHECILDIRPLKEETGISELDIAKRLIDYGFHAPTMSFPVAGTLMVEPTESEGKAELDRFIDAMLAIRAEIDQVKAGVWPLEDNPLVNAPHIQSELVAEWAHPYSREVAVFPAGVADKYWPTVKRLDDVYGDRNLFCSCVPISDYQ.

Position 708 is an N6-(pyridoxal phosphate)lysine (K708).

It belongs to the GcvP family. As to quaternary structure, the glycine cleavage system is composed of four proteins: P, T, L and H. Pyridoxal 5'-phosphate serves as cofactor.

The enzyme catalyses N(6)-[(R)-lipoyl]-L-lysyl-[glycine-cleavage complex H protein] + glycine + H(+) = N(6)-[(R)-S(8)-aminomethyldihydrolipoyl]-L-lysyl-[glycine-cleavage complex H protein] + CO2. Functionally, the glycine cleavage system catalyzes the degradation of glycine. The P protein binds the alpha-amino group of glycine through its pyridoxal phosphate cofactor; CO(2) is released and the remaining methylamine moiety is then transferred to the lipoamide cofactor of the H protein. The polypeptide is Glycine dehydrogenase (decarboxylating) (Salmonella agona (strain SL483)).